Reading from the N-terminus, the 728-residue chain is 1,4-alpha-glucan branching enzyme GlgB (728 aa).

Asp405 acts as the Nucleophile in catalysis. Glu458 functions as the Proton donor in the catalytic mechanism.

It belongs to the glycosyl hydrolase 13 family. GlgB subfamily. As to quaternary structure, monomer.

It carries out the reaction Transfers a segment of a (1-&gt;4)-alpha-D-glucan chain to a primary hydroxy group in a similar glucan chain.. Its pathway is glycan biosynthesis; glycogen biosynthesis. Its function is as follows. Catalyzes the formation of the alpha-1,6-glucosidic linkages in glycogen by scission of a 1,4-alpha-linked oligosaccharide from growing alpha-1,4-glucan chains and the subsequent attachment of the oligosaccharide to the alpha-1,6 position. The protein is 1,4-alpha-glucan branching enzyme GlgB of Serratia proteamaculans (strain 568).